Here is a 280-residue protein sequence, read N- to C-terminus: Ribose-phosphate pyrophosphokinase (280 aa).

ATP-binding positions include 32–34 (DGE) and 89–90 (RQ). The Mg(2+) site is built by His122 and Asp160. Residue Lys183 is part of the active site. Residues Arg185, Asp209, and 213–217 (STGGT) contribute to the D-ribose 5-phosphate site.

This sequence belongs to the ribose-phosphate pyrophosphokinase family. Class III (archaeal) subfamily. Mg(2+) serves as cofactor.

The protein resides in the cytoplasm. The catalysed reaction is D-ribose 5-phosphate + ATP = 5-phospho-alpha-D-ribose 1-diphosphate + AMP + H(+). The protein operates within metabolic intermediate biosynthesis; 5-phospho-alpha-D-ribose 1-diphosphate biosynthesis; 5-phospho-alpha-D-ribose 1-diphosphate from D-ribose 5-phosphate (route I): step 1/1. With respect to regulation, activated by Co(2+) and Ni(2+) ions, however Mg(2+) ion shows almost no significant effect on the activity. Equally inhibited by ADP, CTP and GTP, while dTTP and UTP are less inhibitory. Its function is as follows. Involved in the biosynthesis of the central metabolite phospho-alpha-D-ribosyl-1-pyrophosphate (PRPP) via the transfer of pyrophosphoryl group from ATP to 1-hydroxyl of ribose-5-phosphate (Rib-5-P). It can also use CTP and GTP as substrates in addition to ATP. This is Ribose-phosphate pyrophosphokinase from Thermococcus kodakarensis (strain ATCC BAA-918 / JCM 12380 / KOD1) (Pyrococcus kodakaraensis (strain KOD1)).